The chain runs to 264 residues: Indole-3-glycerol phosphate synthase (264 aa).

Belongs to the TrpC family.

The catalysed reaction is 1-(2-carboxyphenylamino)-1-deoxy-D-ribulose 5-phosphate + H(+) = (1S,2R)-1-C-(indol-3-yl)glycerol 3-phosphate + CO2 + H2O. The protein operates within amino-acid biosynthesis; L-tryptophan biosynthesis; L-tryptophan from chorismate: step 4/5. The sequence is that of Indole-3-glycerol phosphate synthase from Polaromonas sp. (strain JS666 / ATCC BAA-500).